The following is a 91-amino-acid chain: Early E3B 10.4 kDa protein (91 aa).

Residues 1 to 22 form the signal peptide; the sequence is MIPRNFFFTILICPFNVCATFT. The Lumenal segment spans residues 23–34; sequence AVATASPDCIGP. A helical membrane pass occupies residues 35–60; it reads FASYALFAFVTCICVCSIVCLVINFF. Residues 61–91 lie on the Cytoplasmic side of the membrane; the sequence is QLVDWIFVRIAYLRHHPEYRNQNVAALLRLI.

Belongs to the adenoviridae E3B family.

The protein resides in the host endoplasmic reticulum membrane. Down-regulates the EGF receptor. This chain is Early E3B 10.4 kDa protein, found in Human adenovirus B serotype 3 (HAdV-3).